The primary structure comprises 30 residues: Snaclec carinactivase-1 regulatory subunit 17 kDa chain (30 aa).

In terms of domain architecture, C-type lectin spans D1 to C30. C2 and C13 are joined by a disulfide.

It belongs to the snaclec family. As to quaternary structure, heterodimer of a metalloproteinase subunit and a regulatory subunit comprising two polypeptides disulfide-linked (14 kDa and 17 kDa chains). Expressed by the venom gland.

Its subcellular location is the secreted. In terms of biological role, calcium-dependent prothrombin activator. This protein may activate prothrombin via recognition by the regulatory subunit of the calcium ion bound conformation of its gamma-carboxyglutamic acid (GLA) domain, and the subsequent conversion of prothrombin to active thrombin is catalyzed by the catalytic subunit. The protein is Snaclec carinactivase-1 regulatory subunit 17 kDa chain of Echis carinatus (Saw-scaled viper).